We begin with the raw amino-acid sequence, 335 residues long: GTPase Obg (335 aa).

The 158-residue stretch at 1–158 (MFVDQITLEL…RLVELELKLI (158 aa)) folds into the Obg domain. An OBG-type G domain is found at 159–334 (ADIGLVGFPN…LYDLFKSKLS (176 aa)). Residues 165 to 172 (GFPNAGKS), 190 to 194 (FTTLH), 215 to 218 (DIPG), 285 to 288 (NKID), and 315 to 317 (SGL) contribute to the GTP site. Positions 172 and 192 each coordinate Mg(2+).

Belongs to the TRAFAC class OBG-HflX-like GTPase superfamily. OBG GTPase family. In terms of assembly, monomer. It depends on Mg(2+) as a cofactor.

The protein resides in the cytoplasm. In terms of biological role, an essential GTPase which binds GTP, GDP and possibly (p)ppGpp with moderate affinity, with high nucleotide exchange rates and a fairly low GTP hydrolysis rate. Plays a role in control of the cell cycle, stress response, ribosome biogenesis and in those bacteria that undergo differentiation, in morphogenesis control. This Chlamydia trachomatis serovar A (strain ATCC VR-571B / DSM 19440 / HAR-13) protein is GTPase Obg.